Consider the following 419-residue polypeptide: Sulfate adenylyltransferase (419 aa).

The protein belongs to the sulfate adenylyltransferase family.

It carries out the reaction sulfate + ATP + H(+) = adenosine 5'-phosphosulfate + diphosphate. It functions in the pathway sulfur metabolism; hydrogen sulfide biosynthesis; sulfite from sulfate: step 1/3. The sequence is that of Sulfate adenylyltransferase from Psychrobacter sp. (strain PRwf-1).